A 324-amino-acid polypeptide reads, in one-letter code: Transcription factor MYB74 (324 aa).

HTH myb-type domains are found at residues K10 to L62 and R63 to L117. 2 DNA-binding regions (H-T-H motif) span residues W38–L62 and W90–I113.

Highly expressed in flowers and at lower levels in rosette leaves and cauline leaves. Expressed at low levels in roots, stems and siliques.

Its subcellular location is the nucleus. Functionally, probable transcription factor that may function in salt stress response. This Arabidopsis thaliana (Mouse-ear cress) protein is Transcription factor MYB74.